Consider the following 107-residue polypeptide: Iron-sulfur cluster assembly protein CyaY (107 aa).

The protein belongs to the frataxin family.

Its function is as follows. Involved in iron-sulfur (Fe-S) cluster assembly. May act as a regulator of Fe-S biogenesis. The protein is Iron-sulfur cluster assembly protein CyaY of Neisseria meningitidis serogroup C / serotype 2a (strain ATCC 700532 / DSM 15464 / FAM18).